The primary structure comprises 237 residues: uncharacterized protein (237 aa).

A helical membrane pass occupies residues 53-70 (LIFLATVLAGLILFYFGV). Positions 85 to 155 (PPIVIKPVAP…TQEKKDVKVA (71 aa)) are disordered. A coiled-coil region spans residues 98–157 (KTQESNQTTKKEVKQEEQKKEEPKKMVQKQETQEKREVKKSEKNEVKQTQEKKDVKVAKK). Composition is skewed to basic and acidic residues over residues 106–122 (TKKEVKQEEQKKEEPKK) and 128–155 (ETQEKREVKKSEKNEVKQTQEKKDVKVA). Positions 165 to 237 (AANLRTYKFQ…HFKDAIFVRK (73 aa)) constitute an SPOR domain.

The protein localises to the membrane. This is an uncharacterized protein from Aquifex aeolicus (strain VF5).